Here is a 188-residue protein sequence, read N- to C-terminus: F-box only protein 36 (188 aa).

The F-box domain occupies 91 to 137; the sequence is FDFLERLSDDLLLTIISYLDLEDIARLCQTSHRFAKLCMSDKLWEQI.

In terms of assembly, directly interacts with SKP1 and CUL1.

In terms of biological role, substrate-recognition component of the SCF (SKP1-CUL1-F-box protein)-type E3 ubiquitin ligase complex. The polypeptide is F-box only protein 36 (FBXO36) (Homo sapiens (Human)).